The following is a 642-amino-acid chain: Tigger transposable element-derived protein 5 (642 aa).

Pro residues-rich tracts occupy residues Met-1 to Pro-10 and Leu-19 to Arg-43. Positions Met-1–Arg-45 are disordered. Residues Ala-47–Leu-98 enclose the HTH psq-type domain. DNA-binding regions (H-T-H motif) lie at residues Gln-74 to Asp-94 and Pro-145 to Arg-178. The HTH CENPB-type domain occupies Gln-112–Arg-185. A disordered region spans residues Arg-185 to Asp-233. Composition is skewed to pro residues over residues Pro-192–Pro-202 and Asp-218–Ala-227. DDE-1 domains follow at residues Asp-233 to Val-357 and Arg-410 to Trp-477. The interval Leu-535–Thr-587 is disordered. Pro residues predominate over residues Ala-552 to Ala-562.

It belongs to the tigger transposable element derived protein family.

Its subcellular location is the nucleus. This is Tigger transposable element-derived protein 5 (TIGD5) from Homo sapiens (Human).